Here is a 292-residue protein sequence, read N- to C-terminus: Cytidine deaminase (292 aa).

CMP/dCMP-type deaminase domains follow at residues 47-167 (TPLK…FGPK) and 186-292 (DHQD…YYSL). Residue 88-90 (NQE) participates in substrate binding. Residue His101 participates in Zn(2+) binding. Residue Glu103 is the Proton donor of the active site. Zn(2+)-binding residues include Cys128 and Cys131.

Belongs to the cytidine and deoxycytidylate deaminase family. Homodimer. Requires Zn(2+) as cofactor.

The enzyme catalyses cytidine + H2O + H(+) = uridine + NH4(+). It catalyses the reaction 2'-deoxycytidine + H2O + H(+) = 2'-deoxyuridine + NH4(+). In terms of biological role, this enzyme scavenges exogenous and endogenous cytidine and 2'-deoxycytidine for UMP synthesis. The polypeptide is Cytidine deaminase (Haemophilus influenzae (strain 86-028NP)).